Reading from the N-terminus, the 235-residue chain is Putative HAD-hydrolase YfnB (235 aa).

Asp10 functions as the Nucleophile in the catalytic mechanism.

This sequence belongs to the HAD-like hydrolase superfamily. YjjG family.

The sequence is that of Putative HAD-hydrolase YfnB (yfnB) from Bacillus subtilis (strain 168).